Here is a 476-residue protein sequence, read N- to C-terminus: ATP synthase subunit beta (476 aa).

152–159 contributes to the ATP binding site; the sequence is GGAGVGKT.

Belongs to the ATPase alpha/beta chains family. In terms of assembly, F-type ATPases have 2 components, CF(1) - the catalytic core - and CF(0) - the membrane proton channel. CF(1) has five subunits: alpha(3), beta(3), gamma(1), delta(1), epsilon(1). CF(0) has three main subunits: a(1), b(2) and c(9-12). The alpha and beta chains form an alternating ring which encloses part of the gamma chain. CF(1) is attached to CF(0) by a central stalk formed by the gamma and epsilon chains, while a peripheral stalk is formed by the delta and b chains.

It localises to the cell inner membrane. The enzyme catalyses ATP + H2O + 4 H(+)(in) = ADP + phosphate + 5 H(+)(out). Its function is as follows. Produces ATP from ADP in the presence of a proton gradient across the membrane. The catalytic sites are hosted primarily by the beta subunits. This is ATP synthase subunit beta from Acidiphilium cryptum (strain JF-5).